We begin with the raw amino-acid sequence, 448 residues long: Homogentisate 1,2-dioxygenase (448 aa).

The active-site Proton acceptor is the histidine 303. Residues histidine 346 and glutamate 352 each coordinate Fe cation. The homogentisate site is built by tyrosine 361 and histidine 382. Histidine 382 is a Fe cation binding site.

This sequence belongs to the homogentisate dioxygenase family. Hexamer; dimer of trimers. Fe cation serves as cofactor.

It catalyses the reaction homogentisate + O2 = 4-maleylacetoacetate + H(+). The protein operates within amino-acid degradation; L-phenylalanine degradation; acetoacetate and fumarate from L-phenylalanine: step 4/6. In terms of biological role, involved in the catabolism of homogentisate (2,5-dihydroxyphenylacetate or 2,5-OH-PhAc), a central intermediate in the degradation of phenylalanine and tyrosine. Catalyzes the oxidative ring cleavage of the aromatic ring of homogentisate to yield maleylacetoacetate. In Rhodopseudomonas palustris (strain ATCC BAA-98 / CGA009), this protein is Homogentisate 1,2-dioxygenase.